Reading from the N-terminus, the 221-residue chain is Vesicle-associated membrane protein 722 (221 aa).

Residues 1-196 are Cytoplasmic-facing; the sequence is MAQQSLIYSF…MWFQNMKIKL (196 aa). In terms of domain architecture, Longin spans 10-114; sequence FVARGTVILV…SLNKEFGSKL (105 aa). The region spanning 130-190 is the v-SNARE coiled-coil homology domain; it reads KLAKVKAQVS…TQMRRKMWFQ (61 aa). A helical; Anchor for type IV membrane protein membrane pass occupies residues 197-217; that stretch reads IVLAIIIALILIIILSICGGF. Topologically, residues 218–221 are vesicular; that stretch reads NCGK.

Belongs to the synaptobrevin family. As to expression, highly expressed in stems and roots. Detected in flowers and leaves.

It is found in the cell membrane. Its subcellular location is the early endosome membrane. Functionally, involved in the targeting and/or fusion of transport vesicles to their target membrane. This chain is Vesicle-associated membrane protein 722, found in Arabidopsis thaliana (Mouse-ear cress).